Reading from the N-terminus, the 730-residue chain is PWWP domain-containing protein 2A (730 aa).

A compositionally biased stretch (low complexity) spans 1–15 (MAAVAAEAAATAASP). A disordered region spans residues 1-134 (MAAVAAEAAA…PPAGGDSAVS (134 aa)). Positions 66–77 (PLPPPPPPPPPG) are enriched in pro residues. A phosphoserine mark is found at S82 and S99. The segment covering 91-108 (PEPAAVPVSPPEQPPAAP) has biased composition (pro residues). Residues 128–346 (GGDSAVSHLI…KLKTDHKVDG (219 aa)) form an interaction with HDAC1 and MTA1 region. Residue K188 forms a Glycyl lysine isopeptide (Lys-Gly) (interchain with G-Cter in SUMO2) linkage. 3 disordered regions span residues 257 to 276 (YNQS…KRKM), 311 to 355 (IRKG…SQRR), and 409 to 531 (KEKA…LGKK). Positions 267–276 (RKIKRPKRKM) are enriched in basic residues. Basic and acidic residues-rich tracts occupy residues 311-329 (IRKG…RRND) and 341-354 (DHKV…ESQR). Residues 396-547 (MDHAKAREVL…SVYLTLNQET (152 aa)) are interaction with the H2A.Z/H2AZ1. The span at 488-501 (SAGEAPSEKPSPSE) shows a compositional bias: low complexity. Over residues 512 to 527 (DTSRVRVPGEQEELRM) the composition is skewed to basic and acidic residues. The region spanning 630–690 (VGDIVWAKIY…LSQLSPFLEN (61 aa)) is the PWWP domain.

As to quaternary structure, component of a MTA1-specific subcomplex of the NuRD complex (M1HR), which is composed of PWWP2A, MTA1/2, HDAC1/2, and RBBP4/7 but does not contain CHD4 and MBD3. Interacts with MTA1; the interaction mediates the association of PWWP2A with the M1HR complex. Interacts with H2A.Z/H2AZ1. Interacts (via PWWP domain) with histone H3 trimethylated at 'Lys-36' (H3K36me3). Does not interact with CHD4 and MBD3.

It localises to the nucleus. Its function is as follows. Chromatin-binding protein that acts as an adapter between distinct nucleosome components (H3K36me3 or H2A.Z) and chromatin-modifying complexes, contributing to the regulation of the levels of histone acetylation at actively transcribed genes. Competes with CHD4 and MBD3 for interaction with MTA1 to form a NuRD subcomplex, preventing the formation of full NuRD complex (containing CHD4 and MBD3), leading to recruitment of HDACs to gene promoters resulting in turn in the deacetylation of nearby H3K27 and H2A.Z. Plays a role in facilitating transcriptional elongation and repression of spurious transcription initiation through regulation of histone acetylation. Essential for proper mitosis progression. The sequence is that of PWWP domain-containing protein 2A (Pwwp2a) from Mus musculus (Mouse).